A 351-amino-acid chain; its full sequence is Phospho-N-acetylmuramoyl-pentapeptide-transferase (351 aa).

The next 10 helical transmembrane spans lie at 3–23 (GIIA…PPLI), 51–71 (TMGG…AHAV), 76–96 (PTVS…VGFL), 113–133 (GAKM…VTMF), 152–172 (FGPP…IVAT), 181–201 (GLDG…VIIG), 223–243 (PLDL…FLWF), 250–270 (IFMG…LAIT), 275–295 (LLLL…IIQV), and 329–349 (FWII…LEWM).

Belongs to the glycosyltransferase 4 family. MraY subfamily. Mg(2+) is required as a cofactor.

Its subcellular location is the cell membrane. The catalysed reaction is UDP-N-acetyl-alpha-D-muramoyl-L-alanyl-gamma-D-glutamyl-meso-2,6-diaminopimeloyl-D-alanyl-D-alanine + di-trans,octa-cis-undecaprenyl phosphate = di-trans,octa-cis-undecaprenyl diphospho-N-acetyl-alpha-D-muramoyl-L-alanyl-D-glutamyl-meso-2,6-diaminopimeloyl-D-alanyl-D-alanine + UMP. Its pathway is cell wall biogenesis; peptidoglycan biosynthesis. Catalyzes the initial step of the lipid cycle reactions in the biosynthesis of the cell wall peptidoglycan: transfers peptidoglycan precursor phospho-MurNAc-pentapeptide from UDP-MurNAc-pentapeptide onto the lipid carrier undecaprenyl phosphate, yielding undecaprenyl-pyrophosphoryl-MurNAc-pentapeptide, known as lipid I. The chain is Phospho-N-acetylmuramoyl-pentapeptide-transferase from Thermobifida fusca (strain YX).